A 494-amino-acid chain; its full sequence is Smoothelin-like protein 1 (494 aa).

Composition is skewed to basic and acidic residues over residues 1–10 (MEQKEGKLSE), 74–104 (DEVK…KEET), 112–166 (TGRK…KATV), and 179–232 (TGQR…KEEA). Residues 1–348 (MEQKEGKLSE…ARPRGPRAQN (348 aa)) are disordered. A coiled-coil region spans residues 123-145 (KEAEEKESTLASEKQKAEEKEAK). Acidic residues predominate over residues 233–255 (DAKEEAEDAEEAEPGSPSEEQEQ). Composition is skewed to low complexity over residues 269–279 (PSSPEEWPESP) and 302–314 (SPSA…SDVP). Over residues 324 to 335 (GEKKEKAPERRV) the composition is skewed to basic and acidic residues. Phosphoserine is present on Ser336. In terms of domain architecture, Calponin-homology (CH) spans 378–484 (GGVKNMLLEW…YIQELYRSLV (107 aa)). A calmodulin-binding region spans residues 476–494 (IQELYRSLVQKGLVKTKKK).

This sequence belongs to the smoothelin family. Interacts with PPP1R12A. Post-translationally, maximal phosphorylation of Ser-336 correlates with maximal relaxation of aorta in response to acetylcholine. Expressed in striated muscles, specifically in type 2a fibers (at protein level).

The protein localises to the cytoplasm. It localises to the myofibril. Its subcellular location is the sarcomere. It is found in the i band. The protein resides in the m line. The protein localises to the nucleus. In terms of biological role, plays a role in the regulation of contractile properties of both striated and smooth muscles. When unphosphorylated, may inhibit myosin dephosphorylation. Phosphorylation at Ser-299 reduces this inhibitory activity. The polypeptide is Smoothelin-like protein 1 (SMTNL1) (Homo sapiens (Human)).